The primary structure comprises 253 residues: Adapter protein MecA (253 aa).

The protein belongs to the MecA family. As to quaternary structure, homodimer.

Its function is as follows. Enables the recognition and targeting of unfolded and aggregated proteins to the ClpC protease or to other proteins involved in proteolysis. This Streptococcus pyogenes serotype M18 (strain MGAS8232) protein is Adapter protein MecA.